The chain runs to 254 residues: Small ribosomal subunit protein uS2 (254 aa).

Belongs to the universal ribosomal protein uS2 family.

This is Small ribosomal subunit protein uS2 from Borrelia hermsii (strain HS1 / DAH).